The following is a 204-amino-acid chain: MTLVKICGITDLDTARTAVDAGADALGFVFAPGRRRIAPDTARAIIRRLPPEVLTVGVFVDEDPETVQGIAAHCGLGALQFHGRESPEYCRGFREKVIKAFGVGNASVRELERAEEYPVWCLLLDTFSPGRPGGTGRVFDWRLIESLKFSRPVILAGGLNPGNVQAAIAAVRPYGVDVSTGVETGGLKDPAKIRSFIKLAREAL.

It belongs to the TrpF family.

It carries out the reaction N-(5-phospho-beta-D-ribosyl)anthranilate = 1-(2-carboxyphenylamino)-1-deoxy-D-ribulose 5-phosphate. It functions in the pathway amino-acid biosynthesis; L-tryptophan biosynthesis; L-tryptophan from chorismate: step 3/5. This chain is N-(5'-phosphoribosyl)anthranilate isomerase, found in Desulforudis audaxviator (strain MP104C).